We begin with the raw amino-acid sequence, 429 residues long: Phenylalanine--tRNA ligase, chloroplastic/mitochondrial (429 aa).

The N-terminal 53 residues, Met-1 to Ser-53, are a transit peptide targeting the chloroplast and mitochondrion. Ala-54 bears the N-acetylalanine mark. Substrate-binding positions include Ser-163–Gln-166, Arg-185, Thr-192–Tyr-194, Gln-199–Glu-201, Glu-269, and Phe-294. The FDX-ACB domain maps to Ser-338 to Arg-429.

Belongs to the class-II aminoacyl-tRNA synthetase family. As to quaternary structure, monomer.

It is found in the plastid. The protein resides in the chloroplast stroma. It localises to the mitochondrion matrix. It catalyses the reaction tRNA(Phe) + L-phenylalanine + ATP = L-phenylalanyl-tRNA(Phe) + AMP + diphosphate + H(+). Functionally, is responsible for the charging of tRNA(Phe) with phenylalanine in mitochondrial translation. This is Phenylalanine--tRNA ligase, chloroplastic/mitochondrial from Arabidopsis thaliana (Mouse-ear cress).